A 388-amino-acid polypeptide reads, in one-letter code: Sphingosine N-acyltransferase-like protein FUM17 (388 aa).

2 helical membrane-spanning segments follow: residues 60-80 (SWALPLLLTIVLPVIYAIHPV) and 113-133 (LWDLAFVAFYANALFLARKFI). An N-linked (GlcNAc...) asparagine glycan is attached at N146. The region spanning 151–368 (GKQQRFMEQM…LLRNAYRLLF (218 aa)) is the TLC domain. 4 consecutive transmembrane segments (helical) span residues 166 to 186 (FAVMGPFGLYVMKTTPGLWIF), 204 to 224 (IKFYYLLQAAYWVQQSVVLVL), 241 to 261 (IITITLIALSYRFHFTHIGIS), and 339 to 359 (FITFGLLATLQTLNIIWLYCL).

This sequence belongs to the sphingosine N-acyltransferase family.

It is found in the endoplasmic reticulum membrane. The protein operates within mycotoxin biosynthesis. Sphingosine N-acyltransferase-like protein; part of the gene cluster that mediates the biosynthesis of fumonisins B1 (FB1), B2 (FB2), B3 (FB3), and B4 (FB4), which are carcinogenic mycotoxins. May contribute to the biosynthesis of ceramide via interaction with Cer3. Does not confer resistance to FB1. The biosynthesis starts with the FUM1-catalyzed carbon chain assembly from one molecule of acetyl-CoA, eight molecules of malonyl-CoA, and two molecules of methionine (in S-adenosyl form). The C18 polyketide chain is released from the enzyme by a nucleophilic attack of a carbanion, which is derived from R-carbon of alanine by decarboxylation, on the carbonyl carbon of polyketide acyl chain. This step is catalyzed by the pyridoxal 5'-phosphate-dependent aminoacyl transferase FUM8. The resultant 3-keto intermediate is then stereospecifically reduced to a 3-hydroxyl product by reductase FUM13. Subsequent oxidations at C-10 by the cytochrome P450 monooxygenase FUM2, C-14 and C-15 by FUM6, FUM12 or FUM15, tricarballylic esterification of the hydroxyl groups on C-14 and C-15 by acyltransferase FUM14, and C-5 hydroxylation by 2-keto-glutarate-dependent dioxygenase FUM3 furnish the biosynthesis of fumonisins. The tricarballylic moieties are most likely derived from the citric acid cycle, and their addition to the carbon backbone may involve FUM7, FUM10, FUM11 and FUM14. This chain is Sphingosine N-acyltransferase-like protein FUM17, found in Gibberella moniliformis (strain M3125 / FGSC 7600) (Maize ear and stalk rot fungus).